A 436-amino-acid chain; its full sequence is tRNA-2-methylthio-N(6)-dimethylallyladenosine synthase (436 aa).

An MTTase N-terminal domain is found at 1–115; it reads MRVFFKTYGC…IAEVLQKAAR (115 aa). C10, C46, C80, C151, C155, and C158 together coordinate [4Fe-4S] cluster. The Radical SAM core domain maps to 137-368; the sequence is RFSKHHAWIT…LELQKQINRE (232 aa). The TRAM domain occupies 371–432; the sequence is MQYLGKVVEI…AGPLYGKLQK (62 aa).

The protein belongs to the methylthiotransferase family. MiaB subfamily. Monomer. It depends on [4Fe-4S] cluster as a cofactor.

The protein resides in the cytoplasm. The enzyme catalyses N(6)-dimethylallyladenosine(37) in tRNA + (sulfur carrier)-SH + AH2 + 2 S-adenosyl-L-methionine = 2-methylsulfanyl-N(6)-dimethylallyladenosine(37) in tRNA + (sulfur carrier)-H + 5'-deoxyadenosine + L-methionine + A + S-adenosyl-L-homocysteine + 2 H(+). Catalyzes the methylthiolation of N6-(dimethylallyl)adenosine (i(6)A), leading to the formation of 2-methylthio-N6-(dimethylallyl)adenosine (ms(2)i(6)A) at position 37 in tRNAs that read codons beginning with uridine. The chain is tRNA-2-methylthio-N(6)-dimethylallyladenosine synthase from Pseudothermotoga lettingae (strain ATCC BAA-301 / DSM 14385 / NBRC 107922 / TMO) (Thermotoga lettingae).